The following is a 147-amino-acid chain: Flagellar assembly factor FliW (147 aa).

It belongs to the FliW family. In terms of assembly, interacts with translational regulator CsrA and flagellin(s).

The protein localises to the cytoplasm. In terms of biological role, acts as an anti-CsrA protein, binds CsrA and prevents it from repressing translation of its target genes, one of which is flagellin. Binds to flagellin and participates in the assembly of the flagellum. This chain is Flagellar assembly factor FliW, found in Oceanobacillus iheyensis (strain DSM 14371 / CIP 107618 / JCM 11309 / KCTC 3954 / HTE831).